Here is a 395-residue protein sequence, read N- to C-terminus: MRAKAASGKAIIVLCLASFLAGSLFMSRTLSRSYIPEEEDHHLTKHLSKHLEIQKDCDEHKRKLIESKSRDIIGEVSRTHQAVKSLERTMSTLEMELAAARTSDRSSEFWSERSAKNQSRLQKVFAVIGINTAFSSKKRRDSVRQTWMPTGEKLKKIEKEKGIVVRFVIGHSATPGGVLDKAIDEEDSEHKDFLRLKHIEGYHQLSTKTRLYFSTATAMYDAEFYVKVDDDVHVNLGMLVTTLARYQSRPRIYIGCMKSGPVLSQKGVKYHEPEFWKFGEEGNKYFRHATGQIYAISKDLATYISTNQGILHRYANEDVSLGAWMLGLEVEHVDERSMCCGTPPDCQWKAQAGNVCAASFDWSCSGICKSVDRMARVHRACAEGDTPLANFRFFV.

The helical; Signal-anchor for type II membrane protein transmembrane segment at 5 to 27 threads the bilayer; the sequence is AASGKAIIVLCLASFLAGSLFMS. Asparagine 117 carries an N-linked (GlcNAc...) asparagine glycan.

It belongs to the glycosyltransferase 31 family. Mn(2+) is required as a cofactor.

Its subcellular location is the golgi apparatus membrane. It participates in protein modification; protein glycosylation. In terms of biological role, beta-1,3-galactosyltransferase that transfers galactose from UDP-galactose to substrates with a terminal glycosyl residue. This chain is Probable beta-1,3-galactosyltransferase 8 (B3GALT8), found in Arabidopsis thaliana (Mouse-ear cress).